A 262-amino-acid polypeptide reads, in one-letter code: Conserved oligomeric Golgi complex subunit 2 (262 aa).

In terms of assembly, component of the conserved oligomeric Golgi (COG or Sec34/Sec35) complex which consists of eight different proteins COG1-COG8. The COG complex interacts with the Rab GTPase YPT1, the Glogi SNAREs GOS1, SEC22, SED5, VTI1 and YKT6 and the COPI coatomer subunit gamma SEC21.

It localises to the golgi apparatus membrane. Functionally, acts as a component of the peripheral membrane COG complex that is involved in intra-Golgi protein trafficking. COG is located at the cis-Golgi, and regulates tethering of retrograde intra-Golgi vesicles and possibly a number of other membrane trafficking events. COG2 is required for ER to Golgi vesicle docking. Not essential for viability. This chain is Conserved oligomeric Golgi complex subunit 2 (COG2), found in Saccharomyces cerevisiae (strain ATCC 204508 / S288c) (Baker's yeast).